A 107-amino-acid chain; its full sequence is MTFVVTDNCIKCKYTDCVEVCPVDCFYEGPNFLVIHPDECIDCALCEPECPAQAIFSEDEVPSGMENFIELNAELAEIWPNITERKDALPDAEEWDGKPGKIADLER.

4Fe-4S ferredoxin-type domains are found at residues 2–30 (TFVV…YEGP) and 31–60 (NFLV…SEDE). Residues C9 and C17 each contribute to the [3Fe-4S] cluster site. [4Fe-4S] cluster contacts are provided by C21, C40, C43, and C46. C50 lines the [3Fe-4S] cluster pocket.

[4Fe-4S] cluster is required as a cofactor. It depends on [3Fe-4S] cluster as a cofactor.

In terms of biological role, ferredoxins are iron-sulfur proteins that transfer electrons in a wide variety of metabolic reactions. The polypeptide is Ferredoxin 1 (fdxA) (Pseudomonas putida (strain ATCC 47054 / DSM 6125 / CFBP 8728 / NCIMB 11950 / KT2440)).